The sequence spans 586 residues: Phosphomethylpyrimidine synthase (586 aa).

Residues M1 to V33 form a disordered region. Basic and acidic residues predominate over residues V22 to V33. Substrate-binding positions include N193, M222, Y251, H287, S307–G309, D348–R351, and E387. H391 is a binding site for Zn(2+). Y414 contacts substrate. H455 is a Zn(2+) binding site. C535, C538, and C543 together coordinate [4Fe-4S] cluster.

This sequence belongs to the ThiC family. [4Fe-4S] cluster serves as cofactor.

It carries out the reaction 5-amino-1-(5-phospho-beta-D-ribosyl)imidazole + S-adenosyl-L-methionine = 4-amino-2-methyl-5-(phosphooxymethyl)pyrimidine + CO + 5'-deoxyadenosine + formate + L-methionine + 3 H(+). The protein operates within cofactor biosynthesis; thiamine diphosphate biosynthesis. In terms of biological role, catalyzes the synthesis of the hydroxymethylpyrimidine phosphate (HMP-P) moiety of thiamine from aminoimidazole ribotide (AIR) in a radical S-adenosyl-L-methionine (SAM)-dependent reaction. The polypeptide is Phosphomethylpyrimidine synthase (Bacillus cereus (strain G9842)).